A 218-amino-acid chain; its full sequence is Large ribosomal subunit protein uL3 (218 aa).

The protein belongs to the universal ribosomal protein uL3 family. In terms of assembly, part of the 50S ribosomal subunit. Forms a cluster with proteins L14 and L19.

In terms of biological role, one of the primary rRNA binding proteins, it binds directly near the 3'-end of the 23S rRNA, where it nucleates assembly of the 50S subunit. The chain is Large ribosomal subunit protein uL3 from Brachyspira pilosicoli (Serpulina pilosicoli).